Reading from the N-terminus, the 261-residue chain is Potassium/proton antiporter CemA (261 aa).

2 consecutive transmembrane segments (helical) span residues 47-67 (FLVF…GPWV) and 138-158 (IISH…YFIM).

It belongs to the CemA family.

Its subcellular location is the plastid. The protein localises to the chloroplast inner membrane. The catalysed reaction is K(+)(in) + H(+)(out) = K(+)(out) + H(+)(in). Contributes to K(+)/H(+) antiport activity by supporting proton efflux to control proton extrusion and homeostasis in chloroplasts in a light-dependent manner to modulate photosynthesis. Prevents excessive induction of non-photochemical quenching (NPQ) under continuous-light conditions. Indirectly promotes efficient inorganic carbon uptake into chloroplasts. This chain is Potassium/proton antiporter CemA, found in Ginkgo biloba (Ginkgo).